The sequence spans 208 residues: Microcin J25-processing protein McjB (208 aa).

The protein resides in the cytoplasm. Functionally, along with McjC, necessary and sufficient to process the inactive microcin J25 (McjA) precursor into the active peptide. This Escherichia coli protein is Microcin J25-processing protein McjB (mcjB).